The primary structure comprises 120 residues: Large ribosomal subunit protein bL19 (120 aa).

The protein belongs to the bacterial ribosomal protein bL19 family.

In terms of biological role, this protein is located at the 30S-50S ribosomal subunit interface and may play a role in the structure and function of the aminoacyl-tRNA binding site. The polypeptide is Large ribosomal subunit protein bL19 (Cyanothece sp. (strain PCC 7425 / ATCC 29141)).